A 339-amino-acid chain; its full sequence is DNA-directed RNA polymerase subunit alpha (339 aa).

Residues 1–233 form an alpha N-terminal domain (alpha-NTD) region; it reads MVREEVAGST…DLFLPFLHAE (233 aa). Residues 264-339 are alpha C-terminal domain (alpha-CTD); sequence KKGIPLNCIF…IDLLKNKLSF (76 aa).

Belongs to the RNA polymerase alpha chain family. In terms of assembly, in plastids the minimal PEP RNA polymerase catalytic core is composed of four subunits: alpha, beta, beta', and beta''. When a (nuclear-encoded) sigma factor is associated with the core the holoenzyme is formed, which can initiate transcription.

It localises to the plastid. Its subcellular location is the chloroplast. It catalyses the reaction RNA(n) + a ribonucleoside 5'-triphosphate = RNA(n+1) + diphosphate. DNA-dependent RNA polymerase catalyzes the transcription of DNA into RNA using the four ribonucleoside triphosphates as substrates. In Aegilops uniaristata (Goatgrass), this protein is DNA-directed RNA polymerase subunit alpha.